A 142-amino-acid polypeptide reads, in one-letter code: Transcriptional regulator MraZ (142 aa).

SpoVT-AbrB domains lie at glutamate 5–glutamate 48 and alanine 77–threonine 120.

It belongs to the MraZ family. In terms of assembly, forms oligomers.

The protein resides in the cytoplasm. It localises to the nucleoid. The protein is Transcriptional regulator MraZ of Dehalococcoides mccartyi (strain ATCC BAA-2100 / JCM 16839 / KCTC 5957 / BAV1).